The sequence spans 135 residues: Interleukin-4 (135 aa).

Residues 1–24 (MGLTSQLIPALVCLLVCTSHFVHG) form the signal peptide. 3 disulfides stabilise this stretch: Cys27-Cys135, Cys48-Cys85, and Cys70-Cys105. N-linked (GlcNAc...) asparagine glycans are attached at residues Asn62 and Asn96.

It belongs to the IL-4/IL-13 family.

The protein localises to the secreted. In terms of biological role, participates in at least several B-cell activation processes as well as of other cell types. It is a costimulator of DNA-synthesis. It induces the expression of class II MHC molecules on resting B-cells. It enhances both secretion and cell surface expression of IgE and IgG1. It also regulates the expression of the low affinity Fc receptor for IgE (CD23) on both lymphocytes and monocytes. Positively regulates IL31RA expression in macrophages. Stimulates autophagy in dendritic cells by interfering with mTORC1 signaling and through the induction of RUFY4. In Capra hircus (Goat), this protein is Interleukin-4 (IL4).